Reading from the N-terminus, the 62-residue chain is Large ribosomal subunit protein bL28 (62 aa).

This sequence belongs to the bacterial ribosomal protein bL28 family.

This is Large ribosomal subunit protein bL28 from Helicobacter pylori (strain Shi470).